A 258-amino-acid chain; its full sequence is UPF0246 protein YaaA (258 aa).

Belongs to the UPF0246 family.

The sequence is that of UPF0246 protein YaaA from Shigella sonnei (strain Ss046).